Consider the following 88-residue polypeptide: Small ribosomal subunit protein bS20 (88 aa).

The interval 1 to 25 is disordered; sequence MANTAQALKRIRQTNKARAQNASQR. The span at 16 to 25 shows a compositional bias: polar residues; it reads KARAQNASQR.

It belongs to the bacterial ribosomal protein bS20 family.

In terms of biological role, binds directly to 16S ribosomal RNA. This Dichelobacter nodosus (strain VCS1703A) protein is Small ribosomal subunit protein bS20.